A 527-amino-acid polypeptide reads, in one-letter code: Bifunctional purine biosynthesis protein PurH (527 aa).

The MGS-like domain occupies 1 to 149; it reads MASDFLPVRR…KNFARVAVAA (149 aa).

This sequence belongs to the PurH family.

It carries out the reaction (6R)-10-formyltetrahydrofolate + 5-amino-1-(5-phospho-beta-D-ribosyl)imidazole-4-carboxamide = 5-formamido-1-(5-phospho-D-ribosyl)imidazole-4-carboxamide + (6S)-5,6,7,8-tetrahydrofolate. The catalysed reaction is IMP + H2O = 5-formamido-1-(5-phospho-D-ribosyl)imidazole-4-carboxamide. Its pathway is purine metabolism; IMP biosynthesis via de novo pathway; 5-formamido-1-(5-phospho-D-ribosyl)imidazole-4-carboxamide from 5-amino-1-(5-phospho-D-ribosyl)imidazole-4-carboxamide (10-formyl THF route): step 1/1. It participates in purine metabolism; IMP biosynthesis via de novo pathway; IMP from 5-formamido-1-(5-phospho-D-ribosyl)imidazole-4-carboxamide: step 1/1. The chain is Bifunctional purine biosynthesis protein PurH from Xanthomonas axonopodis pv. citri (strain 306).